The primary structure comprises 30 residues: Photosystem I reaction center subunit XII (30 aa).

Residues 7 to 26 (IFVALLFALVSAVLAIRLGK) traverse the membrane as a helical segment.

This sequence belongs to the PsaM family.

It localises to the plastid. Its subcellular location is the chloroplast thylakoid membrane. The chain is Photosystem I reaction center subunit XII from Porphyra purpurea (Red seaweed).